A 429-amino-acid polypeptide reads, in one-letter code: Tryptophan synthase beta chain 2 (429 aa).

K111 bears the N6-(pyridoxal phosphate)lysine mark.

It belongs to the TrpB family. As to quaternary structure, tetramer of two alpha and two beta chains. Pyridoxal 5'-phosphate is required as a cofactor.

The enzyme catalyses (1S,2R)-1-C-(indol-3-yl)glycerol 3-phosphate + L-serine = D-glyceraldehyde 3-phosphate + L-tryptophan + H2O. It functions in the pathway amino-acid biosynthesis; L-tryptophan biosynthesis; L-tryptophan from chorismate: step 5/5. In terms of biological role, the beta subunit is responsible for the synthesis of L-tryptophan from indole and L-serine. This chain is Tryptophan synthase beta chain 2 (trpB2), found in Saccharolobus solfataricus (strain ATCC 35092 / DSM 1617 / JCM 11322 / P2) (Sulfolobus solfataricus).